The following is a 344-amino-acid chain: MSKQYEAAGVSLTAGYESVSRMKKHVARSMRKEVMTGLGSFGAMFDLSQLNLKEPVLVSGTDGVGTKLKLAFALDQHDTIGIDCVAMCVNDIIVQGAEPLYFLDYIALGKAIPAKIERIVAGVAEGCVQSGCTLIGGETAEMPGMYADGEYDIAGFAVGAVEKQKLITGEHVQPGDVILGLASSGVHSNGFSLVRKIVAESGLRYEDELMMFGSTIGNTLLMPTRIYVEAVKAALETEKIQAMVHITGGGFYENVPRVLPEGCGATFDPKKWPTLPVFDWLEQAGNVPRHDMYNVFNMGIGYMMIVKPEDVAAVSARLARENETVYTIGTVTSEPGVRILGVDQ.

The protein belongs to the AIR synthase family.

It localises to the cytoplasm. It catalyses the reaction 2-formamido-N(1)-(5-O-phospho-beta-D-ribosyl)acetamidine + ATP = 5-amino-1-(5-phospho-beta-D-ribosyl)imidazole + ADP + phosphate + H(+). The protein operates within purine metabolism; IMP biosynthesis via de novo pathway; 5-amino-1-(5-phospho-D-ribosyl)imidazole from N(2)-formyl-N(1)-(5-phospho-D-ribosyl)glycinamide: step 2/2. This is Phosphoribosylformylglycinamidine cyclo-ligase from Exiguobacterium sibiricum (strain DSM 17290 / CCUG 55495 / CIP 109462 / JCM 13490 / 255-15).